A 188-amino-acid chain; its full sequence is Nicotinamide-nucleotide adenylyltransferase (188 aa).

The segment at 166 to 188 (SDSLERYAATGESLPESLDDLDD) is disordered.

Belongs to the archaeal NMN adenylyltransferase family.

It is found in the cytoplasm. It catalyses the reaction beta-nicotinamide D-ribonucleotide + ATP + H(+) = diphosphate + NAD(+). It functions in the pathway cofactor biosynthesis; NAD(+) biosynthesis; NAD(+) from nicotinamide D-ribonucleotide: step 1/1. This is Nicotinamide-nucleotide adenylyltransferase from Haloarcula marismortui (strain ATCC 43049 / DSM 3752 / JCM 8966 / VKM B-1809) (Halobacterium marismortui).